A 234-amino-acid polypeptide reads, in one-letter code: Probable septum site-determining protein MinC (234 aa).

The protein belongs to the MinC family. In terms of assembly, interacts with MinD and FtsZ.

Its function is as follows. Cell division inhibitor that blocks the formation of polar Z ring septums. Rapidly oscillates between the poles of the cell to destabilize FtsZ filaments that have formed before they mature into polar Z rings. Prevents FtsZ polymerization. The protein is Probable septum site-determining protein MinC of Pseudoalteromonas translucida (strain TAC 125).